Consider the following 211-residue polypeptide: Uracil phosphoribosyltransferase (211 aa).

5-phospho-alpha-D-ribose 1-diphosphate-binding positions include R77, R102, and D129–S137. Uracil is bound by residues I192 and G197–A199. D198 provides a ligand contact to 5-phospho-alpha-D-ribose 1-diphosphate.

The protein belongs to the UPRTase family. It depends on Mg(2+) as a cofactor.

It carries out the reaction UMP + diphosphate = 5-phospho-alpha-D-ribose 1-diphosphate + uracil. It participates in pyrimidine metabolism; UMP biosynthesis via salvage pathway; UMP from uracil: step 1/1. With respect to regulation, allosterically activated by GTP. In terms of biological role, catalyzes the conversion of uracil and 5-phospho-alpha-D-ribose 1-diphosphate (PRPP) to UMP and diphosphate. This chain is Uracil phosphoribosyltransferase, found in Corynebacterium efficiens (strain DSM 44549 / YS-314 / AJ 12310 / JCM 11189 / NBRC 100395).